The primary structure comprises 274 residues: Large ribosomal subunit protein uL2 (274 aa).

The segment at 224 to 259 is disordered; that stretch reads AMNPVDHPHGGGEGRTSGGRHPVTPWGIPTKGYKTR.

Belongs to the universal ribosomal protein uL2 family. Part of the 50S ribosomal subunit. Forms a bridge to the 30S subunit in the 70S ribosome.

Functionally, one of the primary rRNA binding proteins. Required for association of the 30S and 50S subunits to form the 70S ribosome, for tRNA binding and peptide bond formation. It has been suggested to have peptidyltransferase activity; this is somewhat controversial. Makes several contacts with the 16S rRNA in the 70S ribosome. The sequence is that of Large ribosomal subunit protein uL2 from Geobacter sp. (strain M21).